The following is a 605-amino-acid chain: Isocitrate dehydrogenase kinase/phosphatase (605 aa).

Residues 327–333 and Lys-348 contribute to the ATP site; that span reads APGIKGL. Asp-383 is a catalytic residue.

This sequence belongs to the AceK family.

The protein localises to the cytoplasm. The enzyme catalyses L-seryl-[isocitrate dehydrogenase] + ATP = O-phospho-L-seryl-[isocitrate dehydrogenase] + ADP + H(+). Bifunctional enzyme which can phosphorylate or dephosphorylate isocitrate dehydrogenase (IDH) on a specific serine residue. This is a regulatory mechanism which enables bacteria to bypass the Krebs cycle via the glyoxylate shunt in response to the source of carbon. When bacteria are grown on glucose, IDH is fully active and unphosphorylated, but when grown on acetate or ethanol, the activity of IDH declines drastically concomitant with its phosphorylation. The sequence is that of Isocitrate dehydrogenase kinase/phosphatase from Burkholderia lata (strain ATCC 17760 / DSM 23089 / LMG 22485 / NCIMB 9086 / R18194 / 383).